The sequence spans 527 residues: Ribonuclease Y (527 aa).

The helical transmembrane segment at 21 to 41 threads the bilayer; the sequence is ILAIFFSFIIGIVFGGMALFV. The disordered stretch occupies residues 78–97; that stretch reads READKTRNSAETELKERRSE. Residues 217 to 302 form the KH domain; it reads TTNVVPLPSD…EVVTKAKEEV (86 aa). An HD domain is found at 343–436; the sequence is VLQHSIEVAQ…VSAADAISSA (94 aa).

It belongs to the RNase Y family.

Its subcellular location is the cell membrane. Functionally, endoribonuclease that initiates mRNA decay. This is Ribonuclease Y from Dehalococcoides mccartyi (strain ATCC BAA-2100 / JCM 16839 / KCTC 5957 / BAV1).